The chain runs to 494 residues: uncharacterized protein (494 aa).

It belongs to the TPP enzyme family.

This is an uncharacterized protein from Methanocaldococcus jannaschii (strain ATCC 43067 / DSM 2661 / JAL-1 / JCM 10045 / NBRC 100440) (Methanococcus jannaschii).